A 491-amino-acid chain; its full sequence is Aspartyl/glutamyl-tRNA(Asn/Gln) amidotransferase subunit B (491 aa).

This sequence belongs to the GatB/GatE family. GatB subfamily. As to quaternary structure, heterotrimer of A, B and C subunits.

It catalyses the reaction L-glutamyl-tRNA(Gln) + L-glutamine + ATP + H2O = L-glutaminyl-tRNA(Gln) + L-glutamate + ADP + phosphate + H(+). The enzyme catalyses L-aspartyl-tRNA(Asn) + L-glutamine + ATP + H2O = L-asparaginyl-tRNA(Asn) + L-glutamate + ADP + phosphate + 2 H(+). Allows the formation of correctly charged Asn-tRNA(Asn) or Gln-tRNA(Gln) through the transamidation of misacylated Asp-tRNA(Asn) or Glu-tRNA(Gln) in organisms which lack either or both of asparaginyl-tRNA or glutaminyl-tRNA synthetases. The reaction takes place in the presence of glutamine and ATP through an activated phospho-Asp-tRNA(Asn) or phospho-Glu-tRNA(Gln). The chain is Aspartyl/glutamyl-tRNA(Asn/Gln) amidotransferase subunit B from Burkholderia cenocepacia (strain HI2424).